The primary structure comprises 660 residues: Probable alpha-galactosidase D (660 aa).

Residues 1–20 (MLLHFILYAALSSVVTSVSL) form the signal peptide. Residues Asn-47, Asn-91, and Asn-129 are each glycosylated (N-linked (GlcNAc...) asparagine). An intrachain disulfide couples Cys-124 to Cys-157. The Nucleophile role is filled by Asp-155. 2 N-linked (GlcNAc...) asparagine glycosylation sites follow: Asn-182 and Asn-191. 200–204 (EWGIS) is a substrate binding site. The active-site Proton donor is Asp-222. N-linked (GlcNAc...) asparagine glycans are attached at residues Asn-351, Asn-403, Asn-460, Asn-492, Asn-506, Asn-514, and Asn-584.

It belongs to the glycosyl hydrolase 27 family.

Its subcellular location is the secreted. The catalysed reaction is Hydrolysis of terminal, non-reducing alpha-D-galactose residues in alpha-D-galactosides, including galactose oligosaccharides, galactomannans and galactolipids.. Hydrolyzes a variety of simple alpha-D-galactoside as well as more complex molecules such as oligosaccharides and polysaccharides. This is Probable alpha-galactosidase D (aglD) from Aspergillus niger (strain ATCC MYA-4892 / CBS 513.88 / FGSC A1513).